A 55-amino-acid polypeptide reads, in one-letter code: Large ribosomal subunit protein bL33 (55 aa).

Belongs to the bacterial ribosomal protein bL33 family.

This chain is Large ribosomal subunit protein bL33, found in Blochmanniella pennsylvanica (strain BPEN).